A 467-amino-acid chain; its full sequence is Constitutive acid phosphatase (467 aa).

Positions 1-17 (MFKSVVYSVLAAALVNA) are cleaved as a signal peptide. Histidine 75 serves as the catalytic Nucleophile. 6 N-linked (GlcNAc...) asparagine glycosylation sites follow: asparagine 97, asparagine 103, asparagine 162, asparagine 192, asparagine 250, and asparagine 315. Catalysis depends on aspartate 338, which acts as the Proton donor. N-linked (GlcNAc...) asparagine glycosylation is found at asparagine 356, asparagine 390, asparagine 439, asparagine 445, asparagine 456, and asparagine 461.

The protein belongs to the histidine acid phosphatase family.

The catalysed reaction is a phosphate monoester + H2O = an alcohol + phosphate. This is Constitutive acid phosphatase (PHO3) from Saccharomyces cerevisiae (strain ATCC 204508 / S288c) (Baker's yeast).